The following is a 27-amino-acid chain: Augerpeptide hhe6.2 (27 aa).

Disulfide bonds link cysteine 4-cysteine 13, cysteine 8-cysteine 20, and cysteine 12-cysteine 27.

As to expression, expressed by the venom duct.

The protein localises to the secreted. In Hastula hectica (Sea snail), this protein is Augerpeptide hhe6.2.